We begin with the raw amino-acid sequence, 216 residues long: Adenylate kinase (216 aa).

An ATP-binding site is contributed by 10–15 (GAGKGT). The segment at 30 to 59 (STGDIFRKNISENTPLGIEAKGYIDNGQLV) is NMP. Residues Thr-31, Arg-36, 57-59 (QLV), 85-88 (GFPR), and Gln-92 contribute to the AMP site. The segment at 126–163 (GRRVCPSCGASYHVKFNPPTNEGKCDLCGSEVIQRKDD) is LID. Arg-127 provides a ligand contact to ATP. Residues Cys-130 and Cys-133 each contribute to the Zn(2+) site. An ATP-binding site is contributed by 136–137 (SY). 2 residues coordinate Zn(2+): Cys-150 and Cys-153. 2 residues coordinate AMP: Arg-160 and Arg-171. Residue Lys-199 participates in ATP binding.

This sequence belongs to the adenylate kinase family. In terms of assembly, monomer.

The protein resides in the cytoplasm. The enzyme catalyses AMP + ATP = 2 ADP. The protein operates within purine metabolism; AMP biosynthesis via salvage pathway; AMP from ADP: step 1/1. In terms of biological role, catalyzes the reversible transfer of the terminal phosphate group between ATP and AMP. Plays an important role in cellular energy homeostasis and in adenine nucleotide metabolism. This chain is Adenylate kinase, found in Clostridium beijerinckii (strain ATCC 51743 / NCIMB 8052) (Clostridium acetobutylicum).